Here is a 136-residue protein sequence, read N- to C-terminus: Putative pre-16S rRNA nuclease (136 aa).

This sequence belongs to the YqgF nuclease family.

The protein resides in the cytoplasm. Could be a nuclease involved in processing of the 5'-end of pre-16S rRNA. In Francisella tularensis subsp. tularensis (strain FSC 198), this protein is Putative pre-16S rRNA nuclease.